We begin with the raw amino-acid sequence, 147 residues long: UPF0208 membrane protein SO_2914 (147 aa).

The next 2 membrane-spanning stretches (helical) occupy residues 40 to 60 (LAIL…LYTY) and 68 to 88 (ALTI…WLGW).

Belongs to the UPF0208 family.

The protein localises to the cell inner membrane. This chain is UPF0208 membrane protein SO_2914, found in Shewanella oneidensis (strain ATCC 700550 / JCM 31522 / CIP 106686 / LMG 19005 / NCIMB 14063 / MR-1).